The sequence spans 246 residues: 3-deoxy-manno-octulosonate cytidylyltransferase (246 aa).

This sequence belongs to the KdsB family.

Its subcellular location is the cytoplasm. It catalyses the reaction 3-deoxy-alpha-D-manno-oct-2-ulosonate + CTP = CMP-3-deoxy-beta-D-manno-octulosonate + diphosphate. The protein operates within nucleotide-sugar biosynthesis; CMP-3-deoxy-D-manno-octulosonate biosynthesis; CMP-3-deoxy-D-manno-octulosonate from 3-deoxy-D-manno-octulosonate and CTP: step 1/1. Its pathway is bacterial outer membrane biogenesis; lipopolysaccharide biosynthesis. Activates KDO (a required 8-carbon sugar) for incorporation into bacterial lipopolysaccharide in Gram-negative bacteria. This chain is 3-deoxy-manno-octulosonate cytidylyltransferase, found in Leptospira borgpetersenii serovar Hardjo-bovis (strain JB197).